We begin with the raw amino-acid sequence, 505 residues long: Glycerol kinase (505 aa).

ADP is bound at residue threonine 15. Residues threonine 15, threonine 16, and serine 17 each contribute to the ATP site. Threonine 15 is a sn-glycerol 3-phosphate binding site. An ADP-binding site is contributed by arginine 19. Residues arginine 85, glutamate 86, tyrosine 136, and aspartate 249 each coordinate sn-glycerol 3-phosphate. Glycerol is bound by residues arginine 85, glutamate 86, tyrosine 136, aspartate 249, and glutamine 250. Threonine 271 and glycine 314 together coordinate ADP. ATP contacts are provided by threonine 271, glycine 314, glutamine 318, and glycine 415. Residues glycine 415 and asparagine 419 each contribute to the ADP site.

The protein belongs to the FGGY kinase family.

The enzyme catalyses glycerol + ATP = sn-glycerol 3-phosphate + ADP + H(+). Its pathway is polyol metabolism; glycerol degradation via glycerol kinase pathway; sn-glycerol 3-phosphate from glycerol: step 1/1. With respect to regulation, inhibited by fructose 1,6-bisphosphate (FBP). In terms of biological role, key enzyme in the regulation of glycerol uptake and metabolism. Catalyzes the phosphorylation of glycerol to yield sn-glycerol 3-phosphate. In Mycoplasma capricolum subsp. capricolum (strain California kid / ATCC 27343 / NCTC 10154), this protein is Glycerol kinase.